The sequence spans 297 residues: MKNLALIDLFLNEYWIEKGLSENTVQSYRLDLTALCDWLDKNDLSLETLDAVDLQGFLGERLEKGYKATSTARMLSAMRKLFQYLYREKYRVDDPSAVLSSPKLPSRLPKYLTEQQVSDLLNTPNVEVPLELRDKAMLELLYATGLRVTELVSLTIENMSVQQGVVRVIGKGNKERIVPMGEEAAYWVRQFMLYGRPVLLNGQSSDVVFPSQRAQQMTRQTFWHRVKHYAILADIDADALSPHVLRHAFATHLVNHGADLRVVQMLLGHTDLSTTQIYTHVAKERLKRLHERFHPRG.

The Core-binding (CB) domain occupies 1–86; the sequence is MKNLALIDLF…AMRKLFQYLY (86 aa). Residues 107–291 form the Tyr recombinase domain; that stretch reads RLPKYLTEQQ…AKERLKRLHE (185 aa). Residues Arg147, Lys171, His243, Arg246, and His269 contribute to the active site. The active-site O-(3'-phospho-DNA)-tyrosine intermediate is the Tyr278.

The protein belongs to the 'phage' integrase family. XerD subfamily. Forms a cyclic heterotetrameric complex composed of two molecules of XerC and two molecules of XerD.

It is found in the cytoplasm. Functionally, site-specific tyrosine recombinase, which acts by catalyzing the cutting and rejoining of the recombining DNA molecules. The XerC-XerD complex is essential to convert dimers of the bacterial chromosome into monomers to permit their segregation at cell division. It also contributes to the segregational stability of plasmids. This Haemophilus influenzae (strain ATCC 51907 / DSM 11121 / KW20 / Rd) protein is Tyrosine recombinase XerD.